Here is a 331-residue protein sequence, read N- to C-terminus: Ferredoxin--NADP reductase 2 (331 aa).

7 residues coordinate FAD: Glu37, Gln45, Tyr50, Val90, Phe124, Asp286, and Thr327.

This sequence belongs to the ferredoxin--NADP reductase type 2 family. As to quaternary structure, homodimer. It depends on FAD as a cofactor.

The catalysed reaction is 2 reduced [2Fe-2S]-[ferredoxin] + NADP(+) + H(+) = 2 oxidized [2Fe-2S]-[ferredoxin] + NADPH. This chain is Ferredoxin--NADP reductase 2, found in Listeria welshimeri serovar 6b (strain ATCC 35897 / DSM 20650 / CCUG 15529 / CIP 8149 / NCTC 11857 / SLCC 5334 / V8).